Here is a 93-residue protein sequence, read N- to C-terminus: Pancreatic polypeptide prohormone (93 aa).

A signal peptide spans 1-29; it reads MPAACRCLFLLLLSACVALLLQPPLGTRG. Y65 is subject to Tyrosine amide. Residues 89 to 93 constitute a propeptide that is removed on maturation; it reads ELMDE.

This sequence belongs to the NPY family.

It localises to the secreted. Functionally, hormone secreted by pancreatic cells that acts as a regulator of pancreatic and gastrointestinal functions probably by signaling through the G protein-coupled receptor NPY4R2. The polypeptide is Pancreatic polypeptide prohormone (PPY) (Canis lupus familiaris (Dog)).